The chain runs to 373 residues: MSENKVNLLDFDRNALRAFFADELGEKAFRADQIMKWIYHFGCDDFSQMTNVNKALREKLARIAEIRAPEISTEQRSSDGTIKWAMRVGDQEVETVYIPEADRATLCVSSQVGCALECKFCSTGQQGFNRNLTVSEIIGQVWRAAQVVGFPKDTGKRVITNVVMMGMGEPLLNLSNLVPALSLMMEDFGFGLSKRRVTVSTSGVVPALDKLGDMIDVALAISLHAPNDKLRSEIMPINDKYNIQEFLGSVQRYLSKSNANHGRVTVEYVLLDHVNDDMEHARELAELLKDTPSKINLIPFNPFPSNPYGKPSNSRVDRFSKVLMEYGYTVIVRKTRGDDIDAACGQLVGDVIDRTKRTMKKRMQEQEISVKML.

Glu94 (proton acceptor) is an active-site residue. A Radical SAM core domain is found at 100–339 (EADRATLCVS…VIVRKTRGDD (240 aa)). Cys107 and Cys344 are oxidised to a cystine. Residues Cys114, Cys118, and Cys121 each coordinate [4Fe-4S] cluster. S-adenosyl-L-methionine is bound by residues 168 to 169 (GE), Ser200, 222 to 224 (SLH), and Asn301. Catalysis depends on Cys344, which acts as the S-methylcysteine intermediate.

It belongs to the radical SAM superfamily. RlmN family. The cofactor is [4Fe-4S] cluster.

It localises to the cytoplasm. It catalyses the reaction adenosine(2503) in 23S rRNA + 2 reduced [2Fe-2S]-[ferredoxin] + 2 S-adenosyl-L-methionine = 2-methyladenosine(2503) in 23S rRNA + 5'-deoxyadenosine + L-methionine + 2 oxidized [2Fe-2S]-[ferredoxin] + S-adenosyl-L-homocysteine. It carries out the reaction adenosine(37) in tRNA + 2 reduced [2Fe-2S]-[ferredoxin] + 2 S-adenosyl-L-methionine = 2-methyladenosine(37) in tRNA + 5'-deoxyadenosine + L-methionine + 2 oxidized [2Fe-2S]-[ferredoxin] + S-adenosyl-L-homocysteine. Functionally, specifically methylates position 2 of adenine 2503 in 23S rRNA and position 2 of adenine 37 in tRNAs. m2A2503 modification seems to play a crucial role in the proofreading step occurring at the peptidyl transferase center and thus would serve to optimize ribosomal fidelity. The sequence is that of Dual-specificity RNA methyltransferase RlmN from Tolumonas auensis (strain DSM 9187 / NBRC 110442 / TA 4).